The sequence spans 957 residues: Glycine dehydrogenase (decarboxylating) (957 aa).

Lysine 702 bears the N6-(pyridoxal phosphate)lysine mark.

The protein belongs to the GcvP family. The glycine cleavage system is composed of four proteins: P, T, L and H. It depends on pyridoxal 5'-phosphate as a cofactor.

The catalysed reaction is N(6)-[(R)-lipoyl]-L-lysyl-[glycine-cleavage complex H protein] + glycine + H(+) = N(6)-[(R)-S(8)-aminomethyldihydrolipoyl]-L-lysyl-[glycine-cleavage complex H protein] + CO2. The glycine cleavage system catalyzes the degradation of glycine. The P protein binds the alpha-amino group of glycine through its pyridoxal phosphate cofactor; CO(2) is released and the remaining methylamine moiety is then transferred to the lipoamide cofactor of the H protein. In Synechococcus sp. (strain RCC307), this protein is Glycine dehydrogenase (decarboxylating).